We begin with the raw amino-acid sequence, 464 residues long: Asparagine--tRNA ligase (464 aa).

Belongs to the class-II aminoacyl-tRNA synthetase family. In terms of assembly, homodimer.

The protein localises to the cytoplasm. It catalyses the reaction tRNA(Asn) + L-asparagine + ATP = L-asparaginyl-tRNA(Asn) + AMP + diphosphate + H(+). The chain is Asparagine--tRNA ligase from Clostridium beijerinckii (strain ATCC 51743 / NCIMB 8052) (Clostridium acetobutylicum).